Reading from the N-terminus, the 355-residue chain is Methylthioribose-1-phosphate isomerase (355 aa).

Residues Arg-53–Ala-55, Arg-96, and Gln-205 each bind substrate. Catalysis depends on Asp-246, which acts as the Proton donor. Residue Asn-256–Lys-257 coordinates substrate.

The protein belongs to the eIF-2B alpha/beta/delta subunits family. MtnA subfamily.

The catalysed reaction is 5-(methylsulfanyl)-alpha-D-ribose 1-phosphate = 5-(methylsulfanyl)-D-ribulose 1-phosphate. It participates in amino-acid biosynthesis; L-methionine biosynthesis via salvage pathway; L-methionine from S-methyl-5-thio-alpha-D-ribose 1-phosphate: step 1/6. Catalyzes the interconversion of methylthioribose-1-phosphate (MTR-1-P) into methylthioribulose-1-phosphate (MTRu-1-P). In Thermosynechococcus vestitus (strain NIES-2133 / IAM M-273 / BP-1), this protein is Methylthioribose-1-phosphate isomerase.